The sequence spans 318 residues: Protein-methionine-sulfoxide reductase catalytic subunit MsrP (318 aa).

A signal peptide (tat-type signal) is located at residues 1–40 (MKQLMMSDVTPEEIFNQRRQIIKSMGLGIATLGLPNIAFA). Mo-molybdopterin-binding positions include Asn72, 75–76 (YE), Cys130, Thr165, Asn217, Arg222, and 233–235 (SIK).

Belongs to the MsrP family. Heterodimer of a catalytic subunit (MsrP) and a heme-binding subunit (MsrQ). Requires Mo-molybdopterin as cofactor. Post-translationally, predicted to be exported by the Tat system. The position of the signal peptide cleavage has not been experimentally proven.

It localises to the periplasm. The catalysed reaction is L-methionyl-[protein] + a quinone + H2O = L-methionyl-(S)-S-oxide-[protein] + a quinol. The enzyme catalyses L-methionyl-[protein] + a quinone + H2O = L-methionyl-(R)-S-oxide-[protein] + a quinol. In terms of biological role, part of the MsrPQ system that repairs oxidized periplasmic proteins containing methionine sulfoxide residues (Met-O), using respiratory chain electrons. Thus protects these proteins from oxidative-stress damage caused by reactive species of oxygen and chlorine generated by the host defense mechanisms. MsrPQ is essential for the maintenance of envelope integrity under bleach stress, rescuing a wide series of structurally unrelated periplasmic proteins from methionine oxidation. The catalytic subunit MsrP is non-stereospecific, being able to reduce both (R-) and (S-) diastereoisomers of methionine sulfoxide. The protein is Protein-methionine-sulfoxide reductase catalytic subunit MsrP of Haemophilus ducreyi (strain 35000HP / ATCC 700724).